We begin with the raw amino-acid sequence, 147 residues long: Putative protein adenylyltransferase MJ1305 (147 aa).

A GSX(10)DXD motif motif is present at residues 32–46 (GSYARGTAVEYSDVD). Mg(2+) is bound by residues Asp-44 and Asp-46.

This sequence belongs to the MntA antitoxin family. It depends on Mg(2+) as a cofactor.

The enzyme catalyses L-tyrosyl-[protein] + ATP = O-(5'-adenylyl)-L-tyrosyl-[protein] + diphosphate. The catalysed reaction is O-(5'-adenylyl)-L-tyrosyl-[protein] + ATP = O-[5'-(adenylyl-(5'-&gt;3')-adenylyl)]-L-tyrosyl-[protein] + diphosphate. Putative antitoxin component of a putative type VII toxin-antitoxin (TA) system. Its cognate toxin might be MJ1304, which it might AMPylate. The protein is Putative protein adenylyltransferase MJ1305 of Methanocaldococcus jannaschii (strain ATCC 43067 / DSM 2661 / JAL-1 / JCM 10045 / NBRC 100440) (Methanococcus jannaschii).